A 131-amino-acid polypeptide reads, in one-letter code: MKLLLTLLLGSALMCITLADECGLGTHRPVKEVIDNVRTMYYCDCRAGDAERSITVSRCDDNNQKQDDVILTYCGLEQTTGCNTNPYTAAKHDSSGDKPQFYCSCLNYKYEQSHSDYRHWTIRCYMGNICD.

Residues 1-19 (MKLLLTLLLGSALMCITLA) form the signal peptide. Residues 20-38 (DECGLGTHRPVKEVIDNVR) constitute a propeptide that is removed on maturation.

Contains 4 disulfide bonds. As to expression, expressed by the venom duct.

The protein localises to the secreted. Its function is as follows. Probable neurotoxin with unknown target. Possibly targets ion channels. In Californiconus californicus (California cone), this protein is Conotoxin Cal8.1.